The primary structure comprises 128 residues: Fluoride-specific ion channel FluC (128 aa).

4 helical membrane passes run 5 to 25, 35 to 55, 67 to 87, and 96 to 116; these read IVAI…LSLA, LGTL…AVVF, LFVI…SVEV, and FGWA…LTAL. 2 residues coordinate Na(+): Gly-75 and Thr-78.

This sequence belongs to the fluoride channel Fluc/FEX (TC 1.A.43) family.

It localises to the cell inner membrane. It carries out the reaction fluoride(in) = fluoride(out). Na(+) is not transported, but it plays an essential structural role and its presence is essential for fluoride channel function. Functionally, fluoride-specific ion channel. Important for reducing fluoride concentration in the cell, thus reducing its toxicity. This chain is Fluoride-specific ion channel FluC, found in Burkholderia orbicola (strain MC0-3).